The chain runs to 647 residues: MAEEEAPKKSRAAGGGASWELCAGALSARLAEEGSGDAGGRRRPPVDPRRLARQLLLLLWLLEAPLLLGVRAQAAGQGPGQGPGPGQQPPPPPQQQQSGQQYNGERGISVPDHGYCQPISIPLCTDIAYNQTIMPNLLGHTNQEDAGLEVHQFYPLVKVQCSAELKFFLCSMYAPVCTVLEQALPPCRSLCERARQGCEALMNKFGFQWPDTLKCEKFPVHGAGELCVGQNTSDKGTPTPSLLPEFWTSNPQHGGGGHRGGFPGGAGASERGKFSCPRALKVPSYLNYHFLGEKDCGAPCEPTKVYGLMYFGPEELRFSRTWIGIWSVLCCASTLFTVLTYLVDMRRFSYPERPIIFLSGCYTAVAVAYIAGFLLEDRVVCNDKFAEDGARTVAQGTKKEGCTILFMMLYFFSMASSIWWVILSLTWFLAAGMKWGHEAIEANSQYFHLAAWAVPAIKTITILALGQVDGDVLSGVCFVGLNNVDALRGFVLAPLFVYLFIGTSFLLAGFVSLFRIRTIMKHDGTKTEKLEKLMVRIGVFSVLYTVPATIVIACYFYEQAFRDQWERSWVAQSCKSYAIPCPHLQAGGGAPPHPPMSPDFTVFMIKYLMTLIVGITSGFWIWSGKTLNSWRKFYTRLTNSKQGETTV.

Positions 1 to 69 are cleaved as a signal peptide; the sequence is MAEEEAPKKS…WLLEAPLLLG (69 aa). Topologically, residues 73 to 322 are extracellular; sequence QAAGQGPGQG…PEELRFSRTW (250 aa). Residues 74–104 are disordered; that stretch reads AAGQGPGQGPGPGQQPPPPPQQQQSGQQYNG. The region spanning 111–230 is the FZ domain; it reads PDHGYCQPIS…HGAGELCVGQ (120 aa). 5 cysteine pairs are disulfide-bonded: Cys-116–Cys-177, Cys-124–Cys-170, Cys-161–Cys-198, Cys-187–Cys-227, and Cys-191–Cys-215. Asn-130 carries N-linked (GlcNAc...) asparagine glycosylation. A glycan (N-linked (GlcNAc...) asparagine) is linked at Asn-231. The helical transmembrane segment at 323 to 343 threads the bilayer; the sequence is IGIWSVLCCASTLFTVLTYLV. At 344-354 the chain is on the cytoplasmic side; it reads DMRRFSYPERP. The chain crosses the membrane as a helical span at residues 355–375; that stretch reads IIFLSGCYTAVAVAYIAGFLL. Residues 376 to 402 lie on the Extracellular side of the membrane; the sequence is EDRVVCNDKFAEDGARTVAQGTKKEGC. Residues 403–423 traverse the membrane as a helical segment; that stretch reads TILFMMLYFFSMASSIWWVIL. At 424–445 the chain is on the cytoplasmic side; that stretch reads SLTWFLAAGMKWGHEAIEANSQ. Residues 446–466 traverse the membrane as a helical segment; it reads YFHLAAWAVPAIKTITILALG. Residues 467–489 are Extracellular-facing; the sequence is QVDGDVLSGVCFVGLNNVDALRG. A helical transmembrane segment spans residues 490–510; the sequence is FVLAPLFVYLFIGTSFLLAGF. The Cytoplasmic segment spans residues 511-536; the sequence is VSLFRIRTIMKHDGTKTEKLEKLMVR. A helical membrane pass occupies residues 537–557; that stretch reads IGVFSVLYTVPATIVIACYFY. Residues 558 to 601 are Extracellular-facing; the sequence is EQAFRDQWERSWVAQSCKSYAIPCPHLQAGGGAPPHPPMSPDFT. Residues 602–622 traverse the membrane as a helical segment; the sequence is VFMIKYLMTLIVGITSGFWIW. Residues 623-647 lie on the Cytoplasmic side of the membrane; that stretch reads SGKTLNSWRKFYTRLTNSKQGETTV. The Lys-Thr-X-X-X-Trp motif, mediates interaction with the PDZ domain of Dvl family members motif lies at 625-630; the sequence is KTLNSW. Positions 645-647 match the PDZ-binding motif; the sequence is TTV.

The protein belongs to the G-protein coupled receptor Fz/Smo family. Interacts with MYOC. Interacts with WNT7B. In terms of assembly, (Microbial infection) Interacts with C.difficile toxin TcdB; frizzled receptors constitute the major host receptors for TcdB in the colonic epithelium. Post-translationally, ubiquitinated by ZNRF3, leading to its degradation by the proteasome. In terms of tissue distribution, expressed in adult heart, placenta, lung, kidney, pancreas, prostate, and ovary and in fetal lung and kidney.

Its subcellular location is the cell membrane. Functionally, receptor for Wnt proteins. Activated by WNT3A, WNT3, WNT1 and to a lesser extent WNT2, but apparently not by WNT4, WNT5A, WNT5B, WNT6, WNT7A or WNT7B. Contradictory results showing activation by WNT7B have been described for mouse. Functions in the canonical Wnt/beta-catenin signaling pathway. The canonical Wnt/beta-catenin signaling pathway leads to the activation of disheveled proteins, inhibition of GSK-3 kinase, nuclear accumulation of beta-catenin and activation of Wnt target genes. A second signaling pathway involving PKC and calcium fluxes has been seen for some family members, but it is not yet clear if it represents a distinct pathway or if it can be integrated in the canonical pathway, as PKC seems to be required for Wnt-mediated inactivation of GSK-3 kinase. Both pathways seem to involve interactions with G-proteins. May be involved in transduction and intercellular transmission of polarity information during tissue morphogenesis and/or in differentiated tissues. In terms of biological role, (Microbial infection) Acts as a receptor for C.difficile toxin TcdB in the colonic epithelium. The polypeptide is Frizzled-1 (FZD1) (Homo sapiens (Human)).